We begin with the raw amino-acid sequence, 859 residues long: Probable helicase A859L (859 aa).

Residues 178 to 349 form the Helicase ATP-binding domain; that stretch reads YQELRRSGRA…KNRELFGGVA (172 aa). ATP is bound at residue 191–198; sequence MACRCGKT. Positions 298–301 match the DEAH box motif; the sequence is DECH. One can recognise a Helicase C-terminal domain in the interval 401-553; that stretch reads HLKTNITAPK…RFYEHLLNPS (153 aa).

The protein belongs to the asfivirus helicase A859L family.

The chain is Probable helicase A859L from African swine fever virus (isolate Tick/South Africa/Pretoriuskop Pr4/1996) (ASFV).